Here is a 942-residue protein sequence, read N- to C-terminus: Mitogen-activated protein kinase kinase kinase 14 (942 aa).

The segment covering Gly136–Lys152 has biased composition (basic residues). Disordered regions lie at residues Gly136–Gln156 and Val291–Ser326. The region spanning Met402–Leu657 is the Protein kinase domain. An interaction with ZFP91 region spans residues Thr403–Lys655. ATP is bound by residues Val408 to Val416 and Lys431. Residue Asp517 is the Proton acceptor of the active site. A Phosphothreonine modification is found at Thr561. Disordered stretches follow at residues Val660 to Arg756 and Ser801 to Val823. Residues Glu707 to Ser720 are compositionally biased toward pro residues. Polar residues predominate over residues Ser809–Val823.

It belongs to the protein kinase superfamily. STE Ser/Thr protein kinase family. MAP kinase kinase kinase subfamily. In terms of assembly, interacts with TRAF2, TRAF3, TRAF5, TRAF6, IKKA and NF-kappa-B2/P100. Interacts with PELI3. Interacts with NIBP; the interaction is direct. Interacts with ARRB1 and ARRB2. Interacts with GRB10. Interacts with ZFP91. Interacts with NLRP12; this interaction promotes proteasomal degradation of MAP3K14. Directly interacts with DDX3X. Interacts (via C-terminus and kinase domain) with PPPC3A (via N-terminus) and PPP3CB. In terms of processing, phosphorylation at Thr-561 is required to activate its kinase activity and 'Lys-63'-linked polyubiquitination. Phosphorylated by CHUK/IKKA leading to MAP3K14 destabilization. Autophosphorylated. Post-translationally, ubiquitinated. Undergoes both 'Lys-48'- and 'Lys-63'-linked polyubiquitination. 'Lys-48'-linked polyubiquitination leads to its degradation by the proteasome, while 'Lys-63'-linked polyubiquitination stabilizes and activates it.

It is found in the cytoplasm. It carries out the reaction L-seryl-[protein] + ATP = O-phospho-L-seryl-[protein] + ADP + H(+). It catalyses the reaction L-threonyl-[protein] + ATP = O-phospho-L-threonyl-[protein] + ADP + H(+). Its function is as follows. Lymphotoxin beta-activated kinase which seems to be exclusively involved in the activation of NF-kappa-B and its transcriptional activity. Phosphorylates CHUK/IKKA. Promotes proteolytic processing of NFKB2/P100, which leads to activation of NF-kappa-B via the non-canonical pathway. Has an essential role in the non-canonical NF-kappa-B signalining that regulates genes encoding molecules involved in B-cell survival, lymphoid organogenesis, and immune response. Could act in a receptor-selective manner. This chain is Mitogen-activated protein kinase kinase kinase 14, found in Mus musculus (Mouse).